The chain runs to 251 residues: Phosphoribosylaminoimidazole-succinocarboxamide synthase (251 aa).

It belongs to the SAICAR synthetase family.

It carries out the reaction 5-amino-1-(5-phospho-D-ribosyl)imidazole-4-carboxylate + L-aspartate + ATP = (2S)-2-[5-amino-1-(5-phospho-beta-D-ribosyl)imidazole-4-carboxamido]succinate + ADP + phosphate + 2 H(+). It functions in the pathway purine metabolism; IMP biosynthesis via de novo pathway; 5-amino-1-(5-phospho-D-ribosyl)imidazole-4-carboxamide from 5-amino-1-(5-phospho-D-ribosyl)imidazole-4-carboxylate: step 1/2. This chain is Phosphoribosylaminoimidazole-succinocarboxamide synthase, found in Phenylobacterium zucineum (strain HLK1).